The primary structure comprises 198 residues: NAD(P)H dehydrogenase (quinone) (198 aa).

Residues 6–190 form the Flavodoxin-like domain; it reads ILVLYYSRHG…LCRALGKRLA (185 aa). FMN is bound by residues 12–17, 79–81, 114–120, and H135; these read SRHGAT, TRF, and STASLHG.

The protein belongs to the WrbA family. As to quaternary structure, homodimer. The cofactor is FMN.

The enzyme catalyses a quinone + NADH + H(+) = a quinol + NAD(+). It catalyses the reaction a quinone + NADPH + H(+) = a quinol + NADP(+). The protein is NAD(P)H dehydrogenase (quinone) of Pseudomonas aeruginosa (strain ATCC 15692 / DSM 22644 / CIP 104116 / JCM 14847 / LMG 12228 / 1C / PRS 101 / PAO1).